The primary structure comprises 82 residues: Turripeptide IX-23 (82 aa).

A signal peptide spans 1 to 23 (MMAKLMITVMMVLLLSLQQGADG). A propeptide spanning residues 24-50 (RSERWRKNQMAASSIMRNLITARIDPP) is cleaved from the precursor. 3 disulfide bridges follow: Cys-53/Cys-68, Cys-58/Cys-72, and Cys-64/Cys-79.

Belongs to the Pg turripeptide superfamily. Expressed by the venom duct.

It is found in the secreted. The polypeptide is Turripeptide IX-23 (Gemmula speciosa (Splendid gem-turris)).